Consider the following 295-residue polypeptide: Tetrahydromethanopterin S-methyltransferase subunit E (295 aa).

A run of 7 helical transmembrane segments spans residues 4-24 (MITGLGVVALMGAAATIAGAA), 60-80 (GEPVAYGTWCGIAGSVAFVLM), 87-107 (VIMAIAIGAVIAAMVHTTYAV), 140-160 (GFIVTFCTVGLSYLMTLPIPG), 161-181 (FAHPFPLPLLAVLWGITIGAI), 234-254 (YGGPLTGFAFGAIVFLSFWNT), and 255-275 (IVFGITGGIISGLIIVLLLII).

Belongs to the MtrE family. As to quaternary structure, the complex is composed of 8 subunits; MtrA, MtrB, MtrC, MtrD, MtrE, MtrF, MtrG and MtrH.

The protein localises to the cell membrane. The enzyme catalyses 5-methyl-5,6,7,8-tetrahydromethanopterin + coenzyme M + 2 Na(+)(in) = 5,6,7,8-tetrahydromethanopterin + methyl-coenzyme M + 2 Na(+)(out). It functions in the pathway one-carbon metabolism; methanogenesis from CO(2); methyl-coenzyme M from 5,10-methylene-5,6,7,8-tetrahydromethanopterin: step 2/2. Its function is as follows. Part of a complex that catalyzes the formation of methyl-coenzyme M and tetrahydromethanopterin from coenzyme M and methyl-tetrahydromethanopterin. This is an energy-conserving, sodium-ion translocating step. This chain is Tetrahydromethanopterin S-methyltransferase subunit E, found in Methanothermobacter marburgensis (strain ATCC BAA-927 / DSM 2133 / JCM 14651 / NBRC 100331 / OCM 82 / Marburg) (Methanobacterium thermoautotrophicum).